The sequence spans 738 residues: Adhesion G protein-coupled receptor L4 (738 aa).

The signal sequence occupies residues 1–19; it reads MRLLLLLVGLSTLLNHSYT. An EGF-like 1 domain is found at 20 to 56; that stretch reads QNCKTPCLPNAKCEVLDEVAACFCSTGYTGNGITICE. The Extracellular portion of the chain corresponds to 20 to 480; the sequence is QNCKTPCLPN…DYNILTRITQ (461 aa). 9 disulfide bridges follow: Cys-22-Cys-32, Cys-26-Cys-41, Cys-43-Cys-55, Cys-61-Cys-73, Cys-67-Cys-82, Cys-84-Cys-105, Cys-111-Cys-123, Cys-117-Cys-132, and Cys-134-Cys-155. Positions 57–106 constitute an EGF-like 2; calcium-binding domain; that stretch reads DVDECNETSVCGDHAVCENTNGGFSCFCVEGYQTSTGKTQFTPNDGSYCQ. Asn-62 carries N-linked (GlcNAc...) asparagine glycosylation. Residues 107–156 enclose the EGF-like 3; calcium-binding domain; the sequence is DVDECNETSVCGDHAVCENTNGGFSCFCVEGYQTSTGKTQFTPNDGSYCQ. N-linked (GlcNAc...) asparagine glycosylation is present at Asn-112. Asn-175, Asn-226, Asn-297, Asn-421, Asn-429, and Asn-443 each carry an N-linked (GlcNAc...) asparagine glycan. The 176-residue stretch at 292 to 467 folds into the GAIN-B domain; it reads TQFDMNSTDL…AILMSPSTSI (176 aa). 2 disulfides stabilise this stretch: Cys-417–Cys-449 and Cys-437–Cys-451. The tract at residues 417–467 is GPS; the sequence is CAFWNYSVDDMNNGSWSSEGCELTYSNDTHTSCRCSHLTHFAILMSPSTSI. A helical membrane pass occupies residues 481–501; that stretch reads LGIIISLICLAICIFTFWFFS. Over 502–522 the chain is Cytoplasmic; that stretch reads EIQSTRTTIHKNLCCSLFLAQ. Residues 523–543 traverse the membrane as a helical segment; that stretch reads LVFLVGININTNKLVCSIIAG. At 544–547 the chain is on the extracellular side; it reads LLHY. Residues 548–568 form a helical membrane-spanning segment; the sequence is FFLAAFAWMCIEGIYLYLIVV. Over 569–580 the chain is Cytoplasmic; the sequence is GLIYNKGFLHKN. The helical transmembrane segment at 581–601 threads the bilayer; the sequence is FYIFGYLSPAVVVGFSASLGY. Residues 602-621 lie on the Extracellular side of the membrane; that stretch reads RYYGTTKVCWLSTENNFIWS. A helical membrane pass occupies residues 622 to 642; it reads FIGPACLIILVNLLAFGVIIY. Over 643-666 the chain is Cytoplasmic; it reads KVFRHTAGLKPEVSCYENIRSCAR. The helical transmembrane segment at 667 to 687 threads the bilayer; sequence GALALLFLLGTTWTFGVLHVV. Residues 688–694 are Extracellular-facing; that stretch reads HASVVTA. A helical membrane pass occupies residues 695-715; that stretch reads YLFTVSNAFQGMFIFLFLCVL. The Cytoplasmic portion of the chain corresponds to 716-738; that stretch reads SRKIQEEYYRLFKNVPCCFECLR.

This sequence belongs to the G-protein coupled receptor 2 family. Adhesion G-protein coupled receptor (ADGR) subfamily. Heterodimer of 2 chains generated by proteolytic processing; the large extracellular N-terminal fragment and the membrane-bound C-terminal fragment predominantly remain associated and non-covalently linked. In terms of processing, proteolytically cleaved into 2 subunits, an extracellular alpha subunit and a seven-transmembrane subunit. Post-translationally, glycosylated. In terms of tissue distribution, abundantly expressed in heart, lung, and kidney. Less evident expression is observed in brain, skeletal muscle, liver and spleen. No expression is detected in testis.

The protein localises to the cell membrane. Endothelial orphan receptor that acts as a key regulator of angiogenesis. The polypeptide is Adhesion G protein-coupled receptor L4 (Adgrl4) (Rattus norvegicus (Rat)).